Here is a 736-residue protein sequence, read N- to C-terminus: Polyribonucleotide nucleotidyltransferase (736 aa).

Mg(2+) is bound by residues Asp518 and Asp524. The KH domain occupies 584–644 (PSLQIFSINP…QKVEAAKEHI (61 aa)). In terms of domain architecture, S1 motif spans 665–732 (GEVFKGKVKK…NKNKVELGRA (68 aa)).

Belongs to the polyribonucleotide nucleotidyltransferase family. Requires Mg(2+) as cofactor.

Its subcellular location is the cytoplasm. It carries out the reaction RNA(n+1) + phosphate = RNA(n) + a ribonucleoside 5'-diphosphate. Functionally, involved in mRNA degradation. Catalyzes the phosphorolysis of single-stranded polyribonucleotides processively in the 3'- to 5'-direction. This is Polyribonucleotide nucleotidyltransferase from Wolinella succinogenes (strain ATCC 29543 / DSM 1740 / CCUG 13145 / JCM 31913 / LMG 7466 / NCTC 11488 / FDC 602W) (Vibrio succinogenes).